A 596-amino-acid polypeptide reads, in one-letter code: Ferredoxin--nitrite reductase, chloroplastic (596 aa).

The N-terminal 28 residues, 1–28, are a transit peptide targeting the chloroplast; the sequence is MASSASLQRFLPPYPHAAASRCRPPGVR. Positions 1–56 are disordered; that stretch reads MASSASLQRFLPPYPHAAASRCRPPGVRARPVQSSTVSAPSSSTPAADEAVSAERL. Over residues 31–47 the composition is skewed to low complexity; it reads PVQSSTVSAPSSSTPAA. 4 residues coordinate [4Fe-4S] cluster: cysteine 474, cysteine 480, cysteine 515, and cysteine 519. Residue cysteine 519 coordinates siroheme.

This sequence belongs to the nitrite and sulfite reductase 4Fe-4S domain family. Monomer. It depends on siroheme as a cofactor. [4Fe-4S] cluster is required as a cofactor.

The protein resides in the plastid. It localises to the chloroplast. The catalysed reaction is 6 oxidized [2Fe-2S]-[ferredoxin] + NH4(+) + 2 H2O = nitrite + 6 reduced [2Fe-2S]-[ferredoxin] + 8 H(+). The protein operates within nitrogen metabolism; nitrate reduction (assimilation). Functionally, catalyzes the six-electron reduction of nitrite to ammonium. This chain is Ferredoxin--nitrite reductase, chloroplastic, found in Oryza sativa subsp. japonica (Rice).